The chain runs to 130 residues: Small ribosomal subunit protein uS11 (130 aa).

It belongs to the universal ribosomal protein uS11 family. As to quaternary structure, part of the 30S ribosomal subunit. Interacts with proteins S7 and S18. Binds to IF-3.

Its function is as follows. Located on the platform of the 30S subunit, it bridges several disparate RNA helices of the 16S rRNA. Forms part of the Shine-Dalgarno cleft in the 70S ribosome. The protein is Small ribosomal subunit protein uS11 of Gluconobacter oxydans (strain 621H) (Gluconobacter suboxydans).